Reading from the N-terminus, the 656-residue chain is Sulfate transporter 1.3 (656 aa).

A disordered region spans residues 1-30; sequence MSARAHPVDDDGEISPVERSSPRQANTPYV. At 1-94 the chain is on the cytoplasmic side; sequence MSARAHPVDD…GRKYNLKLFR (94 aa). Residues 95–115 traverse the membrane as a helical segment; it reads GDLIAGLTIASLCIPQDIGYA. Residues 116–119 lie on the Extracellular side of the membrane; that stretch reads KLAS. A helical membrane pass occupies residues 120–140; sequence LDPKYGLYSSFVPPLVYACMG. At 141–144 the chain is on the cytoplasmic side; the sequence is SSKD. A helical membrane pass occupies residues 145 to 165; that stretch reads IAIGPVAVVSLLLGTLLRAEI. Topologically, residues 166-176 are extracellular; that stretch reads DPNTNPNEYLR. A run of 2 helical transmembrane segments spans residues 177–197 and 198–218; these read LAFTSTFFAGVTQAALGFFRL and GFLIDFLSHAAVVGFMGGAAI. Over 219 to 256 the chain is Extracellular; that stretch reads TIALQQLKGFLGINKFTKKTDIIAVLSSVISSAHHGWN. A helical membrane pass occupies residues 257–277; that stretch reads WQTILISASFLIFLLISKFIG. At 278-283 the chain is on the cytoplasmic side; it reads KRNKKL. Residues 284-304 form a helical membrane-spanning segment; sequence FWIPAIAPLVSVIISTFFVYI. The Extracellular segment spans residues 305 to 342; it reads TRADKKGVQIVKHLDKGLNPSSLRLIYFSGDYLLKGFR. The chain crosses the membrane as a helical span at residues 343-363; sequence IGVVSGMVALTEAVAIGRTFA. Over 364-375 the chain is Cytoplasmic; the sequence is AMKDYQIDGNKE. The chain crosses the membrane as a helical span at residues 376–396; that stretch reads MVALGAMNVIGSMTSCYVSTG. Topologically, residues 397-412 are extracellular; that stretch reads SFSRSAVNFMAGCQTA. A helical transmembrane segment spans residues 413-433; sequence VSNIIMSIVVLLTLLFLTPLF. Residues 434-441 lie on the Cytoplasmic side of the membrane; it reads KYTPNAIL. The chain crosses the membrane as a helical span at residues 442–462; that stretch reads AAIIINAVIPLVDVNATILIF. At 463–473 the chain is on the extracellular side; the sequence is KIDKLDFVACM. The chain crosses the membrane as a helical span at residues 474-494; sequence GAFFGVIFVSVEIGLLIAVGI. Residues 495–656 are Cytoplasmic-facing; that stretch reads SFAKILLQVT…SCSPKLSDEV (162 aa). One can recognise an STAS domain in the interval 525–648; that stretch reads QYPEATRIPG…LTVAEAVDSC (124 aa).

This sequence belongs to the SLC26A/SulP transporter (TC 2.A.53) family. Expressed in the phloem of cotyledons, hypocotyls and roots.

The protein localises to the membrane. Functionally, high-affinity H(+)/sulfate cotransporter that mediates the loading of sulfate into the sieve tube. Plays a central role in the regulation of sulfate assimilation. The chain is Sulfate transporter 1.3 (SULTR1;3) from Arabidopsis thaliana (Mouse-ear cress).